Consider the following 1481-residue polypeptide: Neuropathy target esterase sws (1481 aa).

Over 1–34 (MDVLELLRASANGCYNTIFSDAWSQYVSQQITSS) the chain is Lumenal. A helical transmembrane segment spans residues 35–55 (LYLYIALGILTVLFVAWFIYF). The Cytoplasmic segment spans residues 56-1481 (KRLARLRLRD…KENKNVNTKN (1426 aa)). 175-302 (IFGHFEKPVF…IRVIQVIMIR (128 aa)) serves as a coordination point for a nucleoside 3',5'-cyclic phosphate. Residues 336–420 (HLNSQSQSSQ…NNVQLPEVHG (85 aa)) are disordered. Composition is skewed to low complexity over residues 339–379 (SQSQ…LPLQ) and 401–412 (SGPNPNPNSGNN). Residue S448 is modified to Phosphoserine. A nucleoside 3',5'-cyclic phosphate contacts are provided by residues 492–624 (ELGL…VVRR) and 613–740 (IVLD…LSHR). The 167-residue stretch at 967-1133 (LVLGGGGARG…VNNLPGHLWR (167 aa)) folds into the PNPLA domain. Positions 971–976 (GGGARG) match the GXGXXG motif. The GXSXG signature appears at 998-1002 (GVSIG). The active-site Nucleophile is the S1000. Residue D1120 is the Proton acceptor of the active site. A DGA/G motif is present at residues 1120–1122 (DGG). Phosphoserine is present on S1214. A disordered region spans residues 1366–1481 (LSLSEAEMDS…KENKNVNTKN (116 aa)). 2 stretches are compositionally biased toward basic and acidic residues: residues 1379–1390 (IDFRSDSKKDKA) and 1400–1410 (KDNEDKTDAVD). Residues 1445-1457 (TNTMTTQTTSPTT) are compositionally biased toward low complexity.

The protein belongs to the NTE family. In terms of assembly, interacts with Pka-C3; interaction inhibits the catalytic function of Pka-C3 and the esterase activity of sws.

The protein resides in the endoplasmic reticulum membrane. It carries out the reaction a 1-acyl-sn-glycero-3-phosphocholine + H2O = sn-glycerol 3-phosphocholine + a fatty acid + H(+). In terms of biological role, phospholipase B that deacylates intracellular phosphatidylcholine (PtdCho), generating glycerophosphocholine (GroPtdCho). This deacylation occurs at both sn-2 and sn-1 positions of PtdCho. Its specific chemical modification by certain organophosphorus (OP) compounds leads to distal axonopathy. Plays a role in the signaling mechanism between neurons and glia that regulates glia wrapping during development of the adult brain. Essential for membrane lipid homeostasis and cell survival in both neurons and glia of the adult brain. In Drosophila willistoni (Fruit fly), this protein is Neuropathy target esterase sws.